Reading from the N-terminus, the 517-residue chain is 2,3-bisphosphoglycerate-independent phosphoglycerate mutase (517 aa).

Residues Asp-12 and Ser-62 each coordinate Mn(2+). Ser-62 acts as the Phosphoserine intermediate in catalysis. Substrate contacts are provided by residues His-123, 153 to 154 (RD), Arg-185, Arg-191, 261 to 264 (RSDR), and Lys-336. Positions 403, 407, 444, 445, and 463 each coordinate Mn(2+).

It belongs to the BPG-independent phosphoglycerate mutase family. In terms of assembly, monomer. Mn(2+) serves as cofactor.

The catalysed reaction is (2R)-2-phosphoglycerate = (2R)-3-phosphoglycerate. The protein operates within carbohydrate degradation; glycolysis; pyruvate from D-glyceraldehyde 3-phosphate: step 3/5. Catalyzes the interconversion of 2-phosphoglycerate and 3-phosphoglycerate. In Methylobacillus flagellatus (strain ATCC 51484 / DSM 6875 / VKM B-1610 / KT), this protein is 2,3-bisphosphoglycerate-independent phosphoglycerate mutase.